A 486-amino-acid polypeptide reads, in one-letter code: Ribulose bisphosphate carboxylase large chain, chromosomal (486 aa).

Residues Asn126 and Thr176 each contribute to the substrate site. The Proton acceptor role is filled by Lys178. Lys180 contributes to the substrate binding site. Lys204, Asp206, and Glu207 together coordinate Mg(2+). Residue Lys204 is modified to N6-carboxylysine. His296 serves as the catalytic Proton acceptor. Substrate contacts are provided by Arg297, His329, and Ser381.

The protein belongs to the RuBisCO large chain family. Type I subfamily. Heterohexadecamer of 8 large chains and 8 small chains; disulfide-linked. The disulfide link is formed within the large subunit homodimers. The cofactor is Mg(2+). The disulfide bond which can form between Cys-278 in the large chain dimeric partners within the hexadecamer appears to be associated with oxidative stress and protein turnover.

The catalysed reaction is 2 (2R)-3-phosphoglycerate + 2 H(+) = D-ribulose 1,5-bisphosphate + CO2 + H2O. It carries out the reaction D-ribulose 1,5-bisphosphate + O2 = 2-phosphoglycolate + (2R)-3-phosphoglycerate + 2 H(+). In terms of biological role, ruBisCO catalyzes two reactions: the carboxylation of D-ribulose 1,5-bisphosphate, the primary event in carbon dioxide fixation, as well as the oxidative fragmentation of the pentose substrate. Both reactions occur simultaneously and in competition at the same active site. The sequence is that of Ribulose bisphosphate carboxylase large chain, chromosomal (cbbL1) from Cupriavidus necator (strain ATCC 17699 / DSM 428 / KCTC 22496 / NCIMB 10442 / H16 / Stanier 337) (Ralstonia eutropha).